A 422-amino-acid polypeptide reads, in one-letter code: Serine--tRNA ligase (422 aa).

229–231 (TAE) lines the L-serine pocket. 260–262 (RKE) is a binding site for ATP. Glu-283 provides a ligand contact to L-serine. 347-350 (EISS) serves as a coordination point for ATP. Residue Ser-383 coordinates L-serine.

It belongs to the class-II aminoacyl-tRNA synthetase family. Type-1 seryl-tRNA synthetase subfamily. In terms of assembly, homodimer. The tRNA molecule binds across the dimer.

The protein resides in the cytoplasm. It catalyses the reaction tRNA(Ser) + L-serine + ATP = L-seryl-tRNA(Ser) + AMP + diphosphate + H(+). The enzyme catalyses tRNA(Sec) + L-serine + ATP = L-seryl-tRNA(Sec) + AMP + diphosphate + H(+). It functions in the pathway aminoacyl-tRNA biosynthesis; selenocysteinyl-tRNA(Sec) biosynthesis; L-seryl-tRNA(Sec) from L-serine and tRNA(Sec): step 1/1. Its function is as follows. Catalyzes the attachment of serine to tRNA(Ser). Is also able to aminoacylate tRNA(Sec) with serine, to form the misacylated tRNA L-seryl-tRNA(Sec), which will be further converted into selenocysteinyl-tRNA(Sec). In Geobacter sulfurreducens (strain ATCC 51573 / DSM 12127 / PCA), this protein is Serine--tRNA ligase.